The sequence spans 265 residues: uncharacterized protein (265 aa).

This is an uncharacterized protein from Mycoplasma capricolum subsp. capricolum (strain California kid / ATCC 27343 / NCTC 10154).